Reading from the N-terminus, the 556-residue chain is Formate--tetrahydrofolate ligase (556 aa).

Residue 65 to 72 participates in ATP binding; sequence TPAGEGKT.

It belongs to the formate--tetrahydrofolate ligase family.

The enzyme catalyses (6S)-5,6,7,8-tetrahydrofolate + formate + ATP = (6R)-10-formyltetrahydrofolate + ADP + phosphate. It participates in one-carbon metabolism; tetrahydrofolate interconversion. The polypeptide is Formate--tetrahydrofolate ligase (Clostridium cylindrosporum).